The sequence spans 264 residues: Indole-3-glycerol phosphate synthase (264 aa).

The protein belongs to the TrpC family.

It carries out the reaction 1-(2-carboxyphenylamino)-1-deoxy-D-ribulose 5-phosphate + H(+) = (1S,2R)-1-C-(indol-3-yl)glycerol 3-phosphate + CO2 + H2O. Its pathway is amino-acid biosynthesis; L-tryptophan biosynthesis; L-tryptophan from chorismate: step 4/5. The chain is Indole-3-glycerol phosphate synthase from Xylella fastidiosa (strain 9a5c).